A 215-amino-acid chain; its full sequence is Adenylate kinase (215 aa).

G10–T15 provides a ligand contact to ATP. Residues S30–V59 are NMP. AMP-binding positions include T31, R36, G57 to V59, G85 to R88, and Q92. The segment at G122–D159 is LID. ATP is bound by residues R123 and V132–Y133. AMP contacts are provided by R156 and R167. Residue G201 coordinates ATP.

It belongs to the adenylate kinase family. As to quaternary structure, monomer.

Its subcellular location is the cytoplasm. It catalyses the reaction AMP + ATP = 2 ADP. It participates in purine metabolism; AMP biosynthesis via salvage pathway; AMP from ADP: step 1/1. In terms of biological role, catalyzes the reversible transfer of the terminal phosphate group between ATP and AMP. Plays an important role in cellular energy homeostasis and in adenine nucleotide metabolism. The sequence is that of Adenylate kinase from Pseudomonas fluorescens (strain ATCC BAA-477 / NRRL B-23932 / Pf-5).